Reading from the N-terminus, the 227-residue chain is 2-C-methyl-D-erythritol 4-phosphate cytidylyltransferase (227 aa).

The protein belongs to the IspD/TarI cytidylyltransferase family. IspD subfamily.

It catalyses the reaction 2-C-methyl-D-erythritol 4-phosphate + CTP + H(+) = 4-CDP-2-C-methyl-D-erythritol + diphosphate. The protein operates within isoprenoid biosynthesis; isopentenyl diphosphate biosynthesis via DXP pathway; isopentenyl diphosphate from 1-deoxy-D-xylulose 5-phosphate: step 2/6. Functionally, catalyzes the formation of 4-diphosphocytidyl-2-C-methyl-D-erythritol from CTP and 2-C-methyl-D-erythritol 4-phosphate (MEP). The protein is 2-C-methyl-D-erythritol 4-phosphate cytidylyltransferase of Bordetella parapertussis (strain 12822 / ATCC BAA-587 / NCTC 13253).